Reading from the N-terminus, the 36-residue chain is Protein usd (36 aa).

In terms of biological role, required for translation of SpoIIID. The chain is Protein usd (usd) from Bacillus subtilis (strain 168).